We begin with the raw amino-acid sequence, 689 residues long: Acyl-coenzyme A oxidase 1 (689 aa).

FAD contacts are provided by Thr-149 and Gly-188. Glu-444 acts as the Proton acceptor in catalysis.

Belongs to the acyl-CoA oxidase family. As to quaternary structure, heteropentamer composed of five different subunits. FAD serves as cofactor.

It localises to the peroxisome. It catalyses the reaction a 2,3-saturated acyl-CoA + O2 = a (2E)-enoyl-CoA + H2O2. The protein operates within lipid metabolism; peroxisomal fatty acid beta-oxidation. This chain is Acyl-coenzyme A oxidase 1 (POX1), found in Yarrowia lipolytica (strain CLIB 122 / E 150) (Yeast).